A 124-amino-acid chain; its full sequence is Large ribosomal subunit protein bL19 (124 aa).

Belongs to the bacterial ribosomal protein bL19 family.

Its function is as follows. This protein is located at the 30S-50S ribosomal subunit interface and may play a role in the structure and function of the aminoacyl-tRNA binding site. The polypeptide is Large ribosomal subunit protein bL19 (Acidiphilium cryptum (strain JF-5)).